A 144-amino-acid polypeptide reads, in one-letter code: Large ribosomal subunit protein uL15 (144 aa).

The tract at residues 1–53 (MYLNTLAPAEGAKHSAKRLGRGIGSGLGKTGGRGHKGQKSRTGGGVRRGFEGG) is disordered. Gly residues predominate over residues 21–31 (RGIGSGLGKTG).

The protein belongs to the universal ribosomal protein uL15 family. Part of the 50S ribosomal subunit.

In terms of biological role, binds to the 23S rRNA. The sequence is that of Large ribosomal subunit protein uL15 from Mannheimia succiniciproducens (strain KCTC 0769BP / MBEL55E).